The following is a 361-amino-acid chain: Mitogen-activated protein kinase 14 (361 aa).

One can recognise a Protein kinase domain in the interval 25–309; that stretch reads YQNLTPVGSG…AAEALAHSYF (285 aa). ATP-binding positions include 31 to 39 and K54; that span reads VGSGAYGSV. The active-site Proton acceptor is D151. T181 bears the Phosphothreonine mark. The TXY motif lies at 181 to 183; sequence TGY. Y183 carries the phosphotyrosine modification.

It belongs to the protein kinase superfamily. CMGC Ser/Thr protein kinase family. MAP kinase subfamily. Requires Mg(2+) as cofactor. In terms of processing, dually phosphorylated on Thr-181 and Tyr-183, which activates the enzyme.

It catalyses the reaction L-seryl-[protein] + ATP = O-phospho-L-seryl-[protein] + ADP + H(+). The enzyme catalyses L-threonyl-[protein] + ATP = O-phospho-L-threonyl-[protein] + ADP + H(+). Its activity is regulated as follows. Activated by tyrosine and threonine phosphorylation. Its function is as follows. Serine/threonine kinase which acts as an essential component of the MAP kinase signal transduction pathway. mapk14a is one of the four p38 MAPKs which play an important role in the cascades of cellular responses evoked by extracellular stimuli such as pro-inflammatory cytokines or physical stress leading to direct activation of transcription factors. Accordingly, p38 MAPKs phosphorylate a broad range of proteins and it has been estimated that they may have approximately 200 to 300 substrates each. Some of the targets are downstream kinases which are activated through phosphorylation and further phosphorylate additional targets. MPK2 is activated by upstream MAPKK/MAPKKK and stimulates MAPKAP kinase 2 to phosphorylate small heat shock proteins. Does not phosphorylate myelin basic protein or MAPKAP kinase 1. The protein is Mitogen-activated protein kinase 14 (mapk14) of Xenopus laevis (African clawed frog).